Reading from the N-terminus, the 247-residue chain is MNVLSCSINKLNGLYDISGVEVGQHFYWKIGGFQVHGQVLITSWVVIAILLGSATLAVRNPQTIPTSGQNFFEYVLEFIRDVSKTQIGEEYGPWVPFIGTMFLFIFVSNWSGALLPWKIIQLPHGELAAPTNDINTTVALALLTSVAYFYAGISKKGLGYFGKYIQPTPILLPINILEDFTKPLSLSFRLFGNILADELVVVVLVSLVPLVVPIPVMFLGLFTSGIQALIFATLAAAYIGESMEGHH.

5 helical membrane passes run Q38–V58, V95–L115, I134–S154, L199–L219, and G220–G240.

It belongs to the ATPase A chain family. In terms of assembly, F-type ATPases have 2 components, CF(1) - the catalytic core - and CF(0) - the membrane proton channel. CF(1) has five subunits: alpha(3), beta(3), gamma(1), delta(1), epsilon(1). CF(0) has four main subunits: a, b, b' and c.

The protein localises to the plastid. It localises to the chloroplast thylakoid membrane. Its function is as follows. Key component of the proton channel; it plays a direct role in the translocation of protons across the membrane. In Daucus carota (Wild carrot), this protein is ATP synthase subunit a, chloroplastic.